The primary structure comprises 325 residues: Probable cell division protein WhiA (325 aa).

Positions 273-306 (SLEELGRLADPPMTKDAVAGRIRRLLSMADRKAK) form a DNA-binding region, H-T-H motif.

The protein belongs to the WhiA family.

Functionally, involved in cell division and chromosome segregation. This chain is Probable cell division protein WhiA, found in Mycobacterium bovis (strain BCG / Tokyo 172 / ATCC 35737 / TMC 1019).